Reading from the N-terminus, the 525-residue chain is Serine protease 1 (525 aa).

An N-terminal signal peptide occupies residues 1-32 (MKCKKPSALFSALALVGALGAASVLGAASANS). A propeptide spanning residues 33–211 (ASPVAAATVQ…TVSDDVIVPV (179 aa)) is cleaved from the precursor. Residues cysteine 223 and cysteine 239 are joined by a disulfide bond. Residues histidine 238 and aspartate 270 each act as charge relay system in the active site. 5 disulfides stabilise this stretch: cysteine 310–cysteine 320, cysteine 346–cysteine 376, cysteine 412–cysteine 431, cysteine 453–cysteine 472, and cysteine 496–cysteine 514. The active-site Charge relay system is serine 352. Positions 396–525 (TSTDVTTSYV…GGANQKWWRR (130 aa)) constitute a Ricin B-type lectin domain. Residues 401-525 (TTSYVQGYQN…GGANQKWWRR (125 aa)) are essential for the lytic activity, but not for protease function.

Belongs to the peptidase S1 family.

It is found in the secreted. Major serine protease exhibiting lytic activity toward living yeast cells. Similar to elastase in its substrate specificity and has a lectin-like affinity for mannose. Mannoproteins may be the native substrate for RPI. This Rarobacter faecitabidus protein is Serine protease 1.